The primary structure comprises 25 residues: Small ribosomal subunit protein eS32 (25 aa).

Residues 1–25 (MRAKWRKKRMRRLKRKRRKMRARSK) are disordered.

This sequence belongs to the eukaryotic ribosomal protein eS32 family. In terms of assembly, component of the small ribosomal subunit.

The sequence is that of Small ribosomal subunit protein eS32 (RpL41) from Spodoptera frugiperda (Fall armyworm).